The chain runs to 968 residues: RNA polymerase-associated protein RapA (968 aa).

One can recognise a Helicase ATP-binding domain in the interval 164–334 (DVGRRHAPRV…FARLRLLDPN (171 aa)). Residue 177–184 (DEVGLGKT) participates in ATP binding. Residues 280 to 283 (DEAH) carry the DEAH box motif. In terms of domain architecture, Helicase C-terminal spans 490–662 (RVEWLMGYLT…YLASPDQTEG (173 aa)).

This sequence belongs to the SNF2/RAD54 helicase family. RapA subfamily. As to quaternary structure, interacts with the RNAP. Has a higher affinity for the core RNAP than for the holoenzyme. Its ATPase activity is stimulated by binding to RNAP.

Its function is as follows. Transcription regulator that activates transcription by stimulating RNA polymerase (RNAP) recycling in case of stress conditions such as supercoiled DNA or high salt concentrations. Probably acts by releasing the RNAP, when it is trapped or immobilized on tightly supercoiled DNA. Does not activate transcription on linear DNA. Probably not involved in DNA repair. The protein is RNA polymerase-associated protein RapA of Escherichia coli O1:K1 / APEC.